Reading from the N-terminus, the 365-residue chain is 3-dehydroquinate synthase (365 aa).

Residues 106–110 (GVIGD), 130–131 (TT), lysine 142, lysine 151, and 169–172 (FFAT) contribute to the NAD(+) site. 3 residues coordinate Zn(2+): glutamate 184, histidine 247, and histidine 264.

The protein belongs to the sugar phosphate cyclases superfamily. Dehydroquinate synthase family. Requires Co(2+) as cofactor. The cofactor is Zn(2+). It depends on NAD(+) as a cofactor.

The protein localises to the cytoplasm. The enzyme catalyses 7-phospho-2-dehydro-3-deoxy-D-arabino-heptonate = 3-dehydroquinate + phosphate. It participates in metabolic intermediate biosynthesis; chorismate biosynthesis; chorismate from D-erythrose 4-phosphate and phosphoenolpyruvate: step 2/7. Functionally, catalyzes the conversion of 3-deoxy-D-arabino-heptulosonate 7-phosphate (DAHP) to dehydroquinate (DHQ). This is 3-dehydroquinate synthase from Listeria monocytogenes serotype 4a (strain HCC23).